We begin with the raw amino-acid sequence, 400 residues long: Enoyl-[acyl-carrier-protein] reductase [NADH] 1 (400 aa).

Residues 48 to 53 (GASSGY), 74 to 75 (FE), 111 to 112 (DA), and 139 to 140 (LA) each bind NAD(+). Position 225 (tyrosine 225) interacts with substrate. The active-site Proton donor is tyrosine 235. NAD(+) is bound by residues lysine 244 and 273–275 (VVT).

It belongs to the TER reductase family. In terms of assembly, monomer.

The enzyme catalyses a 2,3-saturated acyl-[ACP] + NAD(+) = a (2E)-enoyl-[ACP] + NADH + H(+). Its pathway is lipid metabolism; fatty acid biosynthesis. In terms of biological role, involved in the final reduction of the elongation cycle of fatty acid synthesis (FAS II). Catalyzes the reduction of a carbon-carbon double bond in an enoyl moiety that is covalently linked to an acyl carrier protein (ACP). The chain is Enoyl-[acyl-carrier-protein] reductase [NADH] 1 from Vibrio vulnificus (strain CMCP6).